We begin with the raw amino-acid sequence, 735 residues long: uncharacterized protein (735 aa).

The 151-residue stretch at 25–175 (DLSCLSPDLL…CIAAVLAGLL (151 aa)) folds into the GAF domain. One can recognise a PAS domain in the interval 185-255 (SEAARRAMLD…RQGFMRHLAT (71 aa)). The 51-residue stretch at 263 to 313 (RLVEVEALRADGSVFPAELTVNEHRAGGRRLFSAFVRDISDRITSRRALER) folds into the PAC domain. Residues 342–464 (GAVVLMLRDL…DGHLLHFAEH (123 aa)) enclose the GGDEF domain. An EAL domain is found at 472–732 (RLELEMALRD…VAGTLPETLA (261 aa)).

This is an uncharacterized protein from Azorhizobium caulinodans (strain ATCC 43989 / DSM 5975 / JCM 20966 / LMG 6465 / NBRC 14845 / NCIMB 13405 / ORS 571).